An 85-amino-acid chain; its full sequence is Large ribosomal subunit protein bL31B (85 aa).

The protein belongs to the bacterial ribosomal protein bL31 family. Type B subfamily. In terms of assembly, part of the 50S ribosomal subunit.

The sequence is that of Large ribosomal subunit protein bL31B from Staphylococcus epidermidis (strain ATCC 35984 / DSM 28319 / BCRC 17069 / CCUG 31568 / BM 3577 / RP62A).